The primary structure comprises 435 residues: Mitochondrial distribution and morphology protein 12 (435 aa).

Residues Met-1–Val-435 enclose the SMP-LTD domain. 2 disordered regions span residues Asp-73–His-113 and Trp-186–Glu-268. The segment covering Thr-96–His-113 has biased composition (basic and acidic residues). Over residues Ser-218–Ser-238 the composition is skewed to low complexity. Positions His-251 to Glu-268 are enriched in basic and acidic residues.

It belongs to the MDM12 family. Component of the ER-mitochondria encounter structure (ERMES) or MDM complex, composed of mmm1, mdm10, mdm12 and mdm34. A mmm1 homodimer associates with one molecule of mdm12 on each side in a pairwise head-to-tail manner, and the SMP-LTD domains of mmm1 and mdm12 generate a continuous hydrophobic tunnel for phospholipid trafficking.

The protein resides in the mitochondrion outer membrane. Its subcellular location is the endoplasmic reticulum membrane. In terms of biological role, component of the ERMES/MDM complex, which serves as a molecular tether to connect the endoplasmic reticulum (ER) and mitochondria. Components of this complex are involved in the control of mitochondrial shape and protein biogenesis, and function in nonvesicular lipid trafficking between the ER and mitochondria. Mdm12 is required for the interaction of the ER-resident membrane protein mmm1 and the outer mitochondrial membrane-resident beta-barrel protein mdm10. The mdm12-mmm1 subcomplex functions in the major beta-barrel assembly pathway that is responsible for biogenesis of all mitochondrial outer membrane beta-barrel proteins, and acts in a late step after the SAM complex. The mdm10-mdm12-mmm1 subcomplex further acts in the TOM40-specific pathway after the action of the mdm12-mmm1 complex. Essential for establishing and maintaining the structure of mitochondria and maintenance of mtDNA nucleoids. This chain is Mitochondrial distribution and morphology protein 12, found in Aspergillus niger (strain ATCC MYA-4892 / CBS 513.88 / FGSC A1513).